Consider the following 138-residue polypeptide: Protein X (138 aa).

Residues 20 to 43 (PLRGQPSGPSVSGTSAGSPSSAAS) form a disordered region. The span at 25–43 (PSGPSVSGTSAGSPSSAAS) shows a compositional bias: low complexity. The tract at residues 68–113 (PCCLGFTCADLRTMDSTVNFVPWHAKRQLGMMQKDFWTAYIRDQLL) is mitochondrial targeting sequence.

It belongs to the orthohepadnavirus protein X family. As to quaternary structure, may form homodimer. May interact with host CEBPA, CFLAR, CREB1, DDB1, E4F1, HBXIP, HSPD1/HSP60, NFKBIA, POLR2E and SMAD4. Interacts with host SMC5-SMC6 complex and induces its degradation. Interacts with host TRPC4AP; leading to prevent ubiquitination of TRPC4AP. Interacts with host PLSCR1; this interaction promotes ubiquitination and degradation of HBx and impairs HBx-mediated cell proliferation. Post-translationally, a fraction may be phosphorylated in insect cells and HepG2 cells, a human hepatoblastoma cell line. Phosphorylated in vitro by host protein kinase C or mitogen-activated protein kinase. N-acetylated in insect cells.

The protein resides in the host cytoplasm. It is found in the host nucleus. It localises to the host mitochondrion. In terms of biological role, multifunctional protein that plays a role in silencing host antiviral defenses and promoting viral transcription. Does not seem to be essential for HBV infection. May be directly involved in development of cirrhosis and liver cancer (hepatocellular carcinoma). Most of cytosolic activities involve modulation of cytosolic calcium. The effect on apoptosis is controversial depending on the cell types in which the studies have been conducted. May induce apoptosis by localizing in mitochondria and causing loss of mitochondrial membrane potential. May also modulate apoptosis by binding host CFLAR, a key regulator of the death-inducing signaling complex (DISC). Promotes viral transcription by using the host E3 ubiquitin ligase DDB1 to target the SMC5-SMC6 complex to proteasomal degradation. This host complex would otherwise bind to viral episomal DNA, and prevents its transcription. Moderately stimulates transcription of many different viral and cellular transcription elements. Promoters and enhancers stimulated by HBx contain DNA binding sites for NF-kappa-B, AP-1, AP-2, c-EBP, ATF/CREB, or the calcium-activated factor NF-AT. The polypeptide is Protein X (Ground squirrel hepatitis virus (strain 27) (GSHV)).